A 338-amino-acid chain; its full sequence is Aspartate carbamoyltransferase catalytic subunit (338 aa).

Carbamoyl phosphate is bound by residues Arg59 and Thr60. Lys87 contacts L-aspartate. 3 residues coordinate carbamoyl phosphate: Arg109, His142, and Gln145. The L-aspartate site is built by Arg182 and Arg253. Residues Gly294 and Pro295 each coordinate carbamoyl phosphate.

It belongs to the aspartate/ornithine carbamoyltransferase superfamily. ATCase family. In terms of assembly, heterododecamer (2C3:3R2) of six catalytic PyrB chains organized as two trimers (C3), and six regulatory PyrI chains organized as three dimers (R2).

It carries out the reaction carbamoyl phosphate + L-aspartate = N-carbamoyl-L-aspartate + phosphate + H(+). The protein operates within pyrimidine metabolism; UMP biosynthesis via de novo pathway; (S)-dihydroorotate from bicarbonate: step 2/3. Functionally, catalyzes the condensation of carbamoyl phosphate and aspartate to form carbamoyl aspartate and inorganic phosphate, the committed step in the de novo pyrimidine nucleotide biosynthesis pathway. In Prochlorococcus marinus (strain SARG / CCMP1375 / SS120), this protein is Aspartate carbamoyltransferase catalytic subunit.